The sequence spans 281 residues: D-arabinitol 2-dehydrogenase [ribulose-forming] (281 aa).

The NADP(+) site is built by leucine 31 and asparagine 52. Serine 169 serves as the catalytic Proton donor. Residues tyrosine 184, lysine 188, isoleucine 217, and threonine 219 each coordinate NADP(+). Tyrosine 184 serves as the catalytic Proton acceptor. Lysine 188 functions as the Lowers pKa of active site Tyr in the catalytic mechanism.

The protein belongs to the short-chain dehydrogenases/reductases (SDR) family.

The catalysed reaction is D-arabinitol + NAD(+) = D-ribulose + NADH + H(+). The protein operates within carbohydrate metabolism; D-arabinitol metabolism. The sequence is that of D-arabinitol 2-dehydrogenase [ribulose-forming] (ARD1) from Candida albicans (strain WO-1) (Yeast).